Consider the following 314-residue polypeptide: MNNTKQPVVILVGPTAVGKTNLSIQLAKSLNAEIISGDSMQIYKGMDIGTAKITEQEMEGVPHHLIDILDPQDSFSTADYQSLVRNKISEIANRGKLPMIVGGTGLYIQSVLYDYTFTEEANDPVFRESMQMAAEREGADFLHAKLAAADPEAAAAIHPNNTRRVIRALEILHTSGKTMSQHLKEQKRELLYNAVLIGLTMDRDTLYERINQRVDLMMQSGLLPEVKRLYDKNVRDCQSIQAIGYKELYAYFDGFVTLSDAVEQLKQNSRRYAKRQLTWFRNKMQVTWFDMTPPVDMELKKKEIFTHIAGKLEL.

Residue 13–20 coordinates ATP; the sequence is GPTAVGKT. 15–20 contacts substrate; that stretch reads TAVGKT. The tract at residues 38–41 is interaction with substrate tRNA; sequence DSMQ.

This sequence belongs to the IPP transferase family. In terms of assembly, monomer. The cofactor is Mg(2+).

It catalyses the reaction adenosine(37) in tRNA + dimethylallyl diphosphate = N(6)-dimethylallyladenosine(37) in tRNA + diphosphate. Its function is as follows. Catalyzes the transfer of a dimethylallyl group onto the adenine at position 37 in tRNAs that read codons beginning with uridine, leading to the formation of N6-(dimethylallyl)adenosine (i(6)A). In Bacillus subtilis (strain 168), this protein is tRNA dimethylallyltransferase.